Here is a 249-residue protein sequence, read N- to C-terminus: NADH-quinone oxidoreductase subunit C (249 aa).

The protein belongs to the complex I 30 kDa subunit family. As to quaternary structure, NDH-1 is composed of 14 different subunits. Subunits NuoB, C, D, E, F, and G constitute the peripheral sector of the complex.

The protein resides in the cell inner membrane. It carries out the reaction a quinone + NADH + 5 H(+)(in) = a quinol + NAD(+) + 4 H(+)(out). NDH-1 shuttles electrons from NADH, via FMN and iron-sulfur (Fe-S) centers, to quinones in the respiratory chain. The immediate electron acceptor for the enzyme in this species is believed to be ubiquinone. Couples the redox reaction to proton translocation (for every two electrons transferred, four hydrogen ions are translocated across the cytoplasmic membrane), and thus conserves the redox energy in a proton gradient. The sequence is that of NADH-quinone oxidoreductase subunit C from Xylella fastidiosa (strain M12).